Reading from the N-terminus, the 691-residue chain is CREB-regulated transcription coactivator 2 (691 aa).

Residues 1–20 (MATSGANGPGSATASASNPR) show a composition bias toward polar residues. Residues 1-30 (MATSGANGPGSATASASNPRKFSEKIALQK) are disordered. Position 2 is an N-acetylalanine (A2). Position 51 is an asymmetric dimethylarginine; by PRMT6 (R51). A phosphoserine mark is found at S70, S86, and S90. R99, R120, and R123 each carry asymmetric dimethylarginine; by PRMT6. S136 is subject to Phosphoserine. Residues R161 and R168 each carry the asymmetric dimethylarginine; by PRMT6 modification. T169 is subject to Phosphothreonine. S171 carries the post-translational modification Phosphoserine; by AMPK, MARK2, SIK1 and SIK2. Residues 174 to 186 (ALHTSVMNPNPQD) are compositionally biased toward polar residues. The disordered stretch occupies residues 174–195 (ALHTSVMNPNPQDTYPGPTPPS). Residue T192 is modified to Phosphothreonine. Residue K234 forms a Glycyl lysine isopeptide (Lys-Gly) (interchain with G-Cter in SUMO2) linkage. The Nuclear export signal motif lies at 271-287 (TGGSLPDLTNLHFPPPL). Residue S274 is modified to Phosphoserine; by MARK2. 2 disordered regions span residues 280–306 (NLHF…GGNS) and 335–491 (HSPL…YSPP). 5 positions are modified to phosphoserine: S306, S368, S393, S433, and S456. Composition is skewed to low complexity over residues 335-383 (HSPL…HALP) and 390-411 (PSLS…SPVL). Over residues 447-468 (SQQQLPKQFSPTMSPTLSSITQ) the composition is skewed to polar residues. The residue at position 488 (Y488) is a Phosphotyrosine. A phosphoserine mark is found at S489 and S492. Phosphothreonine is present on T501. Positions 513 to 543 (CLVQPSGGQPPGRQPHYGTLYPPGSSGHGQQ) are disordered. S611, S621, and S622 each carry phosphoserine.

It belongs to the TORC family. In terms of assembly, binds, as a tetramer, through its N-terminal region, with the bZIP domain of CREB1. 'Arg-314' in the bZIP domain of CREB1 is essential for this interaction. Interaction, via its C-terminal, with TAF4, enhances recruitment of TAF4 to CREB1. Interacts with SIK2. Interacts with 14-3-3 proteins, YWHAB and YWHAG. Interacts (probably when phosphorylated at Ser-171) with YWHAE. Interacts with calmodulin-dependent catalytic subunit PPP3CA/calcineurin A. Interaction with COP1 mediates nuclear export and degradation of CRTC2. Post-translationally, phosphorylation/dephosphorylation states of Ser-171 are required for regulating transduction of CREB activity. CRTCs/TORCs are inactive when phosphorylated, and active when dephosphorylated at this site. This primary site of phosphorylation, is regulated by cAMP and calcium levels and is dependent on the phosphorylation of SIKs (SIK1 and SIK2) by LKB1. Following adenylyl cyclase activation, dephosphorylated at Ser-171 by PPP3CA/calcineurin A resulting in CRTC2 dissociation from 14-3-3 proteins and PPP3CA. Both insulin and AMPK increase this phosphorylation of CRTC2 while glucagon suppresses it. Phosphorylation at Ser-274 by MARK2 is induced under low glucose conditions and dephosphorylated in response to glucose influx. Phosphorylation at Ser-274 promotes interaction with 14-3-3 proteins and translocation to the cytoplasm. In terms of processing, asymmetric dimethylation of arginine resisues by PRMT6 enhances the association of CRTC2 with CREB on the promoters of gluconeogenic genes.

It localises to the cytoplasm. The protein localises to the nucleus. Functionally, transcriptional coactivator for CREB1 which activates transcription through both consensus and variant cAMP response element (CRE) sites. Acts as a coactivator, in the SIK/TORC signaling pathway, being active when dephosphorylated and acts independently of CREB1 'Ser-133' phosphorylation. Enhances the interaction of CREB1 with TAF4. Regulates gluconeogenesis as a component of the LKB1/AMPK/TORC2 signaling pathway. Regulates the expression of specific genes such as the steroidogenic gene, StAR. Potent coactivator of PPARGC1A and inducer of mitochondrial biogenesis in muscle cells. This Rattus norvegicus (Rat) protein is CREB-regulated transcription coactivator 2 (Crtc2).